Reading from the N-terminus, the 150-residue chain is Globin-1 (150 aa).

The region spanning 11–150 (PLSDAEKNKI…MICILLSSAY (140 aa)) is the Globin domain. Heme b is bound by residues H74 and H106.

This sequence belongs to the globin family. Monomer.

The polypeptide is Globin-1 (Mordacia mordax (Southern hemisphere lamprey)).